Here is a 197-residue protein sequence, read N- to C-terminus: MPKKIDTKKIEECIREIIVALGDDPNREGLLDTPKRVSKMYEEVFQGMTLSNREIAEAFGTTFENEDYDSETHNNMVVVKDIPIHSYCEHHLALMYNMKVTVVYIPKDKIIGLSKISRIADMVGRRLQLQERIGTDIAEIVSMVTKSSDVGVLITGEHGCMTSRGIKKPGTLTTTTTFTGKFQTNDLLRQEALLIMK.

Zn(2+) is bound by residues Cys88, His91, and Cys160.

It belongs to the GTP cyclohydrolase I family. As to quaternary structure, homomer.

It carries out the reaction GTP + H2O = 7,8-dihydroneopterin 3'-triphosphate + formate + H(+). The protein operates within cofactor biosynthesis; 7,8-dihydroneopterin triphosphate biosynthesis; 7,8-dihydroneopterin triphosphate from GTP: step 1/1. This Clostridium beijerinckii (strain ATCC 51743 / NCIMB 8052) (Clostridium acetobutylicum) protein is GTP cyclohydrolase 1.